The chain runs to 272 residues: Dermonecrotic toxin LvSicTox-alphaIC1aiii (272 aa).

H4 is a catalytic residue. Residues E24 and D26 each contribute to the Mg(2+) site. H40 acts as the Nucleophile in catalysis. Disulfide bonds link C44/C50 and C46/C189. D84 is a Mg(2+) binding site.

Belongs to the arthropod phospholipase D family. Class II subfamily. The cofactor is Mg(2+). As to expression, expressed by the venom gland.

The protein resides in the secreted. The catalysed reaction is an N-(acyl)-sphingosylphosphocholine = an N-(acyl)-sphingosyl-1,3-cyclic phosphate + choline. The enzyme catalyses an N-(acyl)-sphingosylphosphoethanolamine = an N-(acyl)-sphingosyl-1,3-cyclic phosphate + ethanolamine. It carries out the reaction a 1-acyl-sn-glycero-3-phosphocholine = a 1-acyl-sn-glycero-2,3-cyclic phosphate + choline. It catalyses the reaction a 1-acyl-sn-glycero-3-phosphoethanolamine = a 1-acyl-sn-glycero-2,3-cyclic phosphate + ethanolamine. Functionally, dermonecrotic toxins cleave the phosphodiester linkage between the phosphate and headgroup of certain phospholipids (sphingolipid and lysolipid substrates), forming an alcohol (often choline) and a cyclic phosphate. This toxin acts on sphingomyelin (SM). It may also act on ceramide phosphoethanolamine (CPE), lysophosphatidylcholine (LPC) and lysophosphatidylethanolamine (LPE), but not on lysophosphatidylserine (LPS), and lysophosphatidylglycerol (LPG). It acts by transphosphatidylation, releasing exclusively cyclic phosphate products as second products. Induces dermonecrosis, hemolysis, increased vascular permeability, edema, inflammatory response, and platelet aggregation. In Loxosceles variegata (Recluse spider), this protein is Dermonecrotic toxin LvSicTox-alphaIC1aiii.